The following is a 375-amino-acid chain: Holliday junction branch migration complex subunit RuvB (375 aa).

Residues 1–50 (MAIVSSKSPDPAERRSQAKTKPSVSEPQDSLVRPQAAPEESQRPEDQIRP) are disordered. Residues 13-209 (ERRSQAKTKP…FGLVQRLRFY (197 aa)) are large ATPase domain (RuvB-L). The span at 19-28 (KTKPSVSEPQ) shows a compositional bias: polar residues. Positions 40–49 (ESQRPEDQIR) are enriched in basic and acidic residues. Residues Ile-48, Arg-49, Gly-90, Lys-93, Thr-94, Thr-95, 156–158 (EDF), Arg-199, Tyr-209, and Arg-246 each bind ATP. Thr-94 contributes to the Mg(2+) binding site. Positions 210 to 280 (EVEALTDIVQ…IAATALELYN (71 aa)) are small ATPAse domain (RuvB-S). Positions 283–375 (PCGLDWTDRR…LQQLLTEPET (93 aa)) are head domain (RuvB-H). The DNA site is built by Arg-338 and Arg-343.

Belongs to the RuvB family. As to quaternary structure, homohexamer. Forms an RuvA(8)-RuvB(12)-Holliday junction (HJ) complex. HJ DNA is sandwiched between 2 RuvA tetramers; dsDNA enters through RuvA and exits via RuvB. An RuvB hexamer assembles on each DNA strand where it exits the tetramer. Each RuvB hexamer is contacted by two RuvA subunits (via domain III) on 2 adjacent RuvB subunits; this complex drives branch migration. In the full resolvosome a probable DNA-RuvA(4)-RuvB(12)-RuvC(2) complex forms which resolves the HJ.

It is found in the cytoplasm. The catalysed reaction is ATP + H2O = ADP + phosphate + H(+). In terms of biological role, the RuvA-RuvB-RuvC complex processes Holliday junction (HJ) DNA during genetic recombination and DNA repair, while the RuvA-RuvB complex plays an important role in the rescue of blocked DNA replication forks via replication fork reversal (RFR). RuvA specifically binds to HJ cruciform DNA, conferring on it an open structure. The RuvB hexamer acts as an ATP-dependent pump, pulling dsDNA into and through the RuvAB complex. RuvB forms 2 homohexamers on either side of HJ DNA bound by 1 or 2 RuvA tetramers; 4 subunits per hexamer contact DNA at a time. Coordinated motions by a converter formed by DNA-disengaged RuvB subunits stimulates ATP hydrolysis and nucleotide exchange. Immobilization of the converter enables RuvB to convert the ATP-contained energy into a lever motion, pulling 2 nucleotides of DNA out of the RuvA tetramer per ATP hydrolyzed, thus driving DNA branch migration. The RuvB motors rotate together with the DNA substrate, which together with the progressing nucleotide cycle form the mechanistic basis for DNA recombination by continuous HJ branch migration. Branch migration allows RuvC to scan DNA until it finds its consensus sequence, where it cleaves and resolves cruciform DNA. The chain is Holliday junction branch migration complex subunit RuvB from Synechococcus elongatus (strain ATCC 33912 / PCC 7942 / FACHB-805) (Anacystis nidulans R2).